Here is an 840-residue protein sequence, read N- to C-terminus: Putative pentatricopeptide repeat-containing protein At1g31840 (840 aa).

PPR repeat units follow at residues 98-128 (KDPSFYTIAHVLIRNGMFDVADKVFDEMITN), 145-179 (DADVCKFLMECCCRYGMVDKALEIFVYSTQLGVVI), 180-214 (PQDSVYRMLNSLIGSDRVDLIADHFDKLCRGGIEP), 216-250 (GVSAHGFVLDALFCKGEVTKALDFHRLVMERGFRV), 251-284 (GIVSCNKVLKGLSVDQIEVASRLLSLVLDCGPAP), 285-319 (NVVTFCTLINGFCKRGEMDRAFDLFKVMEQRGIEP), 320-354 (DLIAYSTLIDGYFKAGMLGMGHKLFSQALHKGVKL), 355-389 (DVVVFSSTIDVYVKSGDLATASVVYKRMLCQGISP), 390-424 (NVVTYTILIKGLCQDGRIYEAFGMYGQILKRGMEP), 425-459 (SIVTYSSLIDGFCKCGNLRSGFALYEDMIKMGYPP), 460-494 (DVVIYGVLVDGLSKQGLMLHAMRFSVKMLGQSIRL), 495-529 (NVVVFNSLIDGWCRLNRFDEALKVFRLMGIYGIKP), 530-564 (DVATFTTVMRVSIMEGRLEEALFLFFRMFKMGLEP), 565-599 (DALAYCTLIDAFCKHMKPTIGLQLFDLMQRNKISA), 600-634 (DIAVCNVVIHLLFKCHRIEDASKFFNNLIEGKMEP), 635-669 (DIVTYNTMICGYCSLRRLDEAERIFELLKVTPFGP), 670-704 (NTVTLTILIHVLCKNNDMDGAIRMFSIMAEKGSKP), 705-739 (NAVTYGCLMDWFSKSVDIEGSFKLFEEMQEKGISP), 740-774 (SIVSYSIIIDGLCKRGRVDEATNIFHQAIDAKLLP), and 775-809 (DVVAYAILIRGYCKVGRLVEAALLYEHMLRNGVKP).

The protein belongs to the PPR family. P subfamily.

This is Putative pentatricopeptide repeat-containing protein At1g31840 from Arabidopsis thaliana (Mouse-ear cress).